Consider the following 114-residue polypeptide: Fluoride-specific ion channel FluC 1 (114 aa).

A run of 3 helical transmembrane segments spans residues 28–48 (VFPW…GFLH), 56–76 (ILLL…TFQV), and 91–111 (IIYL…GSWL). Na(+)-binding residues include G66 and T69.

It belongs to the fluoride channel Fluc/FEX (TC 1.A.43) family.

It localises to the cell membrane. The enzyme catalyses fluoride(in) = fluoride(out). Na(+) is not transported, but it plays an essential structural role and its presence is essential for fluoride channel function. Functionally, fluoride-specific ion channel. Important for reducing fluoride concentration in the cell, thus reducing its toxicity. This is Fluoride-specific ion channel FluC 1 from Ligilactobacillus salivarius (strain UCC118) (Lactobacillus salivarius).